Consider the following 376-residue polypeptide: 1-deoxy-D-xylulose 5-phosphate reductoisomerase (376 aa).

6 residues coordinate NADPH: Thr12, Gly13, Ser14, Ile15, Asn39, and Asn116. Lys117 contributes to the 1-deoxy-D-xylulose 5-phosphate binding site. Glu118 contributes to the NADPH binding site. Asp142 lines the Mn(2+) pocket. Residues Ser143, Glu144, Ser164, and His187 each coordinate 1-deoxy-D-xylulose 5-phosphate. Glu144 provides a ligand contact to Mn(2+). Gly193 provides a ligand contact to NADPH. 1-deoxy-D-xylulose 5-phosphate-binding residues include Ser200, Asn205, Lys206, and Glu209. Mn(2+) is bound at residue Glu209.

The protein belongs to the DXR family. It depends on Mg(2+) as a cofactor. Mn(2+) is required as a cofactor.

The enzyme catalyses 2-C-methyl-D-erythritol 4-phosphate + NADP(+) = 1-deoxy-D-xylulose 5-phosphate + NADPH + H(+). It functions in the pathway isoprenoid biosynthesis; isopentenyl diphosphate biosynthesis via DXP pathway; isopentenyl diphosphate from 1-deoxy-D-xylulose 5-phosphate: step 1/6. In terms of biological role, catalyzes the NADPH-dependent rearrangement and reduction of 1-deoxy-D-xylulose-5-phosphate (DXP) to 2-C-methyl-D-erythritol 4-phosphate (MEP). The protein is 1-deoxy-D-xylulose 5-phosphate reductoisomerase of Thermotoga maritima (strain ATCC 43589 / DSM 3109 / JCM 10099 / NBRC 100826 / MSB8).